The chain runs to 312 residues: Homoserine kinase (312 aa).

ATP is bound at residue 91-101 (PVASGLGSSAC).

It belongs to the GHMP kinase family. Homoserine kinase subfamily.

It localises to the cytoplasm. The catalysed reaction is L-homoserine + ATP = O-phospho-L-homoserine + ADP + H(+). It participates in amino-acid biosynthesis; L-threonine biosynthesis; L-threonine from L-aspartate: step 4/5. Catalyzes the ATP-dependent phosphorylation of L-homoserine to L-homoserine phosphate. This is Homoserine kinase from Blochmanniella pennsylvanica (strain BPEN).